The chain runs to 382 residues: D-galactonate dehydratase (382 aa).

Aspartate 183 serves as a coordination point for Mg(2+). Catalysis depends on histidine 185, which acts as the Proton donor. Glutamate 209 and glutamate 235 together coordinate Mg(2+). Catalysis depends on histidine 285, which acts as the Proton acceptor.

This sequence belongs to the mandelate racemase/muconate lactonizing enzyme family. GalD subfamily. Mg(2+) is required as a cofactor.

It carries out the reaction D-galactonate = 2-dehydro-3-deoxy-D-galactonate + H2O. The protein operates within carbohydrate acid metabolism; D-galactonate degradation; D-glyceraldehyde 3-phosphate and pyruvate from D-galactonate: step 1/3. Functionally, catalyzes the dehydration of D-galactonate to 2-keto-3-deoxy-D-galactonate. The sequence is that of D-galactonate dehydratase from Salmonella dublin (strain CT_02021853).